The following is a 245-amino-acid chain: 1-(5-phosphoribosyl)-5-[(5-phosphoribosylamino)methylideneamino] imidazole-4-carboxamide isomerase (245 aa).

Catalysis depends on Asp7, which acts as the Proton acceptor. Asp129 serves as the catalytic Proton donor.

It belongs to the HisA/HisF family.

It is found in the cytoplasm. The enzyme catalyses 1-(5-phospho-beta-D-ribosyl)-5-[(5-phospho-beta-D-ribosylamino)methylideneamino]imidazole-4-carboxamide = 5-[(5-phospho-1-deoxy-D-ribulos-1-ylimino)methylamino]-1-(5-phospho-beta-D-ribosyl)imidazole-4-carboxamide. It functions in the pathway amino-acid biosynthesis; L-histidine biosynthesis; L-histidine from 5-phospho-alpha-D-ribose 1-diphosphate: step 4/9. This chain is 1-(5-phosphoribosyl)-5-[(5-phosphoribosylamino)methylideneamino] imidazole-4-carboxamide isomerase, found in Escherichia coli O81 (strain ED1a).